The primary structure comprises 277 residues: Carbonyl reductase [NADPH] 3 (277 aa).

N-acetylserine is present on S2. NADP(+) contacts are provided by residues 10–34 (VTGANKGIGFAITRDLCRKFSGDVV), 38–42 (RDEAR), 63–64 (DI), and N90. S30 bears the Phosphoserine mark. Substrate is bound at residue S140. The Proton acceptor role is filled by Y194. 194-198 (YGVSK) contributes to the NADP(+) binding site.

The protein belongs to the short-chain dehydrogenases/reductases (SDR) family.

The protein resides in the cytoplasm. The enzyme catalyses a secondary alcohol + NADP(+) = a ketone + NADPH + H(+). The catalysed reaction is a quinone + NADPH + H(+) = a quinol + NADP(+). Its function is as follows. Catalyzes the NADPH-dependent reduction of carbonyl compounds to their corresponding alcohols. Has low NADPH-dependent oxidoreductase activity. Acts on several orthoquinones, as well as on non-quinone compounds, such as isatin or on the anticancer drug oracin. Best substrates for CBR3 is 1,2- naphthoquinone, hence could play a role in protection against cytotoxicity of exogenous quinones. Exerts activity toward ortho-quinones but not paraquinones. No endogenous substrate for CBR3 except isatin has been identified. The polypeptide is Carbonyl reductase [NADPH] 3 (Rattus norvegicus (Rat)).